We begin with the raw amino-acid sequence, 285 residues long: Protein phosphatase 1 regulatory subunit 3B (285 aa).

Residues 62–65 carry the PP1-binding motif motif; the sequence is RVSF. The 109-residue stretch at 125–233 folds into the CBM21 domain; the sequence is RNRLQADHVC…SNRGKNYRII (109 aa). Residue S261 is modified to Phosphoserine.

In terms of assembly, interacts with glycogen, PPP1CC catalytic subunit of PP1 and PYGL. Associates with glycogen particles. Forms complexes with debranching enzyme, glycogen phosphorylase, glycogen synthase and phosphorylase kinase which is necessary for its regulation of PP1 activity. As to expression, highly expressed in the liver and, at lower levels, in skeletal muscle, including in vastus lateralis, gastrocnemius and soleus (at protein level). Highest mRNA levels are observed in skeletal muscle, and only moderate levels in liver and heart. Weak expression in placenta and lung.

In terms of biological role, acts as a glycogen-targeting subunit for phosphatase PP1. Facilitates interaction of the PP1 with enzymes of the glycogen metabolism and regulates its activity. Suppresses the rate at which PP1 dephosphorylates (inactivates) glycogen phosphorylase and enhances the rate at which it activates glycogen synthase and therefore limits glycogen breakdown. Its activity is inhibited by PYGL, resulting in inhibition of the glycogen synthase and glycogen phosphorylase phosphatase activities of PP1. Dramatically increases basal and insulin-stimulated glycogen synthesis upon overexpression in hepatocytes. The sequence is that of Protein phosphatase 1 regulatory subunit 3B (PPP1R3B) from Homo sapiens (Human).